Reading from the N-terminus, the 435-residue chain is 5-methylthioadenosine/S-adenosylhomocysteine deaminase (435 aa).

2 residues coordinate Zn(2+): histidine 65 and histidine 67. The substrate site is built by glutamate 94, arginine 150, and histidine 189. Residue histidine 216 participates in Zn(2+) binding. Residues glutamate 219 and aspartate 304 each contribute to the substrate site. Residue aspartate 304 coordinates Zn(2+).

It belongs to the metallo-dependent hydrolases superfamily. MTA/SAH deaminase family. Zn(2+) is required as a cofactor.

The enzyme catalyses S-adenosyl-L-homocysteine + H2O + H(+) = S-inosyl-L-homocysteine + NH4(+). It carries out the reaction S-methyl-5'-thioadenosine + H2O + H(+) = S-methyl-5'-thioinosine + NH4(+). In terms of biological role, catalyzes the deamination of 5-methylthioadenosine and S-adenosyl-L-homocysteine into 5-methylthioinosine and S-inosyl-L-homocysteine, respectively. Is also able to deaminate adenosine. In Bacillus cereus (strain ATCC 10987 / NRS 248), this protein is 5-methylthioadenosine/S-adenosylhomocysteine deaminase.